Here is a 401-residue protein sequence, read N- to C-terminus: Type 3 secretion system translocon protein SctE (401 aa).

Residues 129–160 (IQRLHEQNMKKIEENQEKIKETEENAKQVKKS) adopt a coiled-coil conformation. A run of 2 helical transmembrane segments spans residues 176–196 (VIVG…AMMV) and 224–244 (ILGP…TVMT). The stretch at 345 to 379 (LALNKADMAALQSIIDRLKEELSHLSESHQQVMEL) forms a coiled coil.

The protein belongs to the SctE/SipB/YopB family. The core secretion machinery of the T3SS is composed of approximately 20 different proteins, including cytoplasmic components, a base, an export apparatus and a needle. This subunit is involved in the formation of a pore, called the translocon, in host membrane. Interacts with YopD/SctB. Together with YopD/SctB, forms a multimeric integral membrane complex.

It is found in the secreted. It localises to the host membrane. In terms of biological role, component of the type III secretion system (T3SS), also called injectisome, which is used to inject bacterial effector proteins into eukaryotic host cells. YopB/SctE and YopD/SctB are inserted into the host membrane where they form a pore and allow the translocation of effector proteins into the cytosol of target cells. Is an essential virulence determinant. Required for YopE and YopH translocation. Shows membrane disruptive activity in vitro. Functionally, interaction with the host cell triggers a signaling response, via activation of the small GTPase Ras, the MAPK kinases ERK and JNK and the nuclear factor NF-kappa-B pathways, and production of the proinflammatory cytokine interleukin-8 (IL-8). YopB/SctE-dependent signaling response is counteracted by YopE, YopH and YopJ in infected host cells. YopB/SctE is directly responsible for signaling and its insertion in the membrane is important to activate the signaling response in the host cell. This is Type 3 secretion system translocon protein SctE from Yersinia pseudotuberculosis serotype I (strain IP32953).